We begin with the raw amino-acid sequence, 232 residues long: Phosphoglycolate phosphatase (232 aa).

Asp-13 acts as the Nucleophile in catalysis. The Mg(2+) site is built by Asp-13, Asp-15, and Asp-175.

Belongs to the HAD-like hydrolase superfamily. CbbY/CbbZ/Gph/YieH family. As to quaternary structure, monomer. It depends on Mg(2+) as a cofactor. The cofactor is chloride.

It carries out the reaction 2-phosphoglycolate + H2O = glycolate + phosphate. The protein operates within organic acid metabolism; glycolate biosynthesis; glycolate from 2-phosphoglycolate: step 1/1. Its function is as follows. Specifically catalyzes the dephosphorylation of 2-phosphoglycolate. Is involved in the dissimilation of the intracellular 2-phosphoglycolate formed during the DNA repair of 3'-phosphoglycolate ends, a major class of DNA lesions induced by oxidative stress. The polypeptide is Phosphoglycolate phosphatase (Yersinia pestis).